A 327-amino-acid polypeptide reads, in one-letter code: Phenylalanine--tRNA ligase alpha subunit (327 aa).

Glu-252 is a binding site for Mg(2+).

This sequence belongs to the class-II aminoacyl-tRNA synthetase family. Phe-tRNA synthetase alpha subunit type 1 subfamily. As to quaternary structure, tetramer of two alpha and two beta subunits. It depends on Mg(2+) as a cofactor.

The protein localises to the cytoplasm. It carries out the reaction tRNA(Phe) + L-phenylalanine + ATP = L-phenylalanyl-tRNA(Phe) + AMP + diphosphate + H(+). The protein is Phenylalanine--tRNA ligase alpha subunit of Yersinia enterocolitica serotype O:8 / biotype 1B (strain NCTC 13174 / 8081).